A 114-amino-acid polypeptide reads, in one-letter code: Putative pterin-4-alpha-carbinolamine dehydratase (114 aa).

This sequence belongs to the pterin-4-alpha-carbinolamine dehydratase family.

The catalysed reaction is (4aS,6R)-4a-hydroxy-L-erythro-5,6,7,8-tetrahydrobiopterin = (6R)-L-erythro-6,7-dihydrobiopterin + H2O. The polypeptide is Putative pterin-4-alpha-carbinolamine dehydratase (Methylococcus capsulatus (strain ATCC 33009 / NCIMB 11132 / Bath)).